Here is a 305-residue protein sequence, read N- to C-terminus: UDP-3-O-acyl-N-acetylglucosamine deacetylase (305 aa).

His78, His237, and Asp241 together coordinate Zn(2+). His264 (proton donor) is an active-site residue.

It belongs to the LpxC family. The cofactor is Zn(2+).

It catalyses the reaction a UDP-3-O-[(3R)-3-hydroxyacyl]-N-acetyl-alpha-D-glucosamine + H2O = a UDP-3-O-[(3R)-3-hydroxyacyl]-alpha-D-glucosamine + acetate. The protein operates within glycolipid biosynthesis; lipid IV(A) biosynthesis; lipid IV(A) from (3R)-3-hydroxytetradecanoyl-[acyl-carrier-protein] and UDP-N-acetyl-alpha-D-glucosamine: step 2/6. Its function is as follows. Catalyzes the hydrolysis of UDP-3-O-myristoyl-N-acetylglucosamine to form UDP-3-O-myristoylglucosamine and acetate, the committed step in lipid A biosynthesis. This chain is UDP-3-O-acyl-N-acetylglucosamine deacetylase, found in Cupriavidus pinatubonensis (strain JMP 134 / LMG 1197) (Cupriavidus necator (strain JMP 134)).